The chain runs to 356 residues: Peptide chain release factor 1 (356 aa).

Gln233 carries the N5-methylglutamine modification.

It belongs to the prokaryotic/mitochondrial release factor family. Methylated by PrmC. Methylation increases the termination efficiency of RF1.

It localises to the cytoplasm. Functionally, peptide chain release factor 1 directs the termination of translation in response to the peptide chain termination codons UAG and UAA. This chain is Peptide chain release factor 1 (prfA), found in Bacillus subtilis (strain 168).